A 969-amino-acid chain; its full sequence is GATOR2 complex protein Wdr59 (969 aa).

The interval 1–24 (MPPTETLRPGERGTAGGPGAGAPE) is disordered. 5 WD repeats span residues 127 to 167 (GHTR…KPAL), 172 to 211 (VCMS…CPTH), 215 to 255 (AHLN…RAEK), 258 to 303 (TTMS…DPIC), and 307 to 351 (GHTD…LKLC). Thr-373 is modified (phosphothreonine). Residues 435–538 (HEFSLLNTNM…RALVAAMKKK (104 aa)) form the RWD domain. The C4-type zinc-finger motif lies at 891-911 (ECRKCAKPKRTPKCEPCKRPV). Positions 892, 895, 904, 907, 917, 928, 933, 936, 939, 950, 953, 955, and 957 each coordinate Zn(2+). The RING-type; atypical zinc finger occupies 912 to 960 (LFCVLCRLPVKGAANACLACGHGGHIDHMMQWFEKHNVCATCGCKCLER).

This sequence belongs to the WD repeat WDR59 family. Component of the GATOR complex consisting of mio, Nup44A/Seh1, Im11, Nplr3, Nplr2, Wdr24, Wdr59 and Sec13. Within the GATOR complex, probable component of the GATOR2 subcomplex which is likely composed of mio, Nup44A/Seh1, Wdr24, Wdr59 and Sec13. The GATOR2 complex associates with unmet in the absence of S-adenosyl-L-methionine; the mio-Wdr24-Nup44A subcomplex is essential and sufficient for this interaction while Wdr59 and Sec13 are dispensable. This association acts as a nutrient sensor to inhibit mTORC1 signaling in the absence of methionine.

It is found in the lysosome membrane. Functionally, a component of the GATOR complex, which functions as a regulator of the amino acid-sensing branch of the mTORC1 signaling pathway. The two GATOR subcomplexes, GATOR1 and GATOR2, regulate the mTORC1 pathway in order to mediate metabolic homeostasis, female gametogenesis and the response to amino acid limitation and complete starvation. GATOR2 activates the mTORC1 signaling pathway through the inhibition of the GATOR1 subcomplex, controlling the switch to cell proliferation and growth under nutrient replete conditions and during female oocyte development. Acts as an atypical component of the GATOR2 subcomplex, which can either promote or inhibit mTORC1 signaling, depending on tissues: inhibits mTORC1 activity by preventing the activity of GATOR2 in the ovary and the eye imaginal disk brain, while it promotes mTORC1 activity in the fat body. The chain is GATOR2 complex protein Wdr59 from Drosophila melanogaster (Fruit fly).